Here is a 61-residue protein sequence, read N- to C-terminus: Small ribosomal subunit protein uS14 (61 aa).

Zn(2+)-binding residues include cysteine 24, cysteine 27, cysteine 40, and cysteine 43.

This sequence belongs to the universal ribosomal protein uS14 family. Zinc-binding uS14 subfamily. As to quaternary structure, part of the 30S ribosomal subunit. Contacts proteins S3 and S10. Zn(2+) is required as a cofactor.

In terms of biological role, binds 16S rRNA, required for the assembly of 30S particles and may also be responsible for determining the conformation of the 16S rRNA at the A site. The polypeptide is Small ribosomal subunit protein uS14 (Syntrophobacter fumaroxidans (strain DSM 10017 / MPOB)).